The following is a 415-amino-acid chain: Putative O-antigen transporter (415 aa).

Residues Met-1 to Asn-11 are Cytoplasmic-facing. Residues Val-12–Tyr-32 form a helical membrane-spanning segment. Topologically, residues Leu-33–Asn-41 are periplasmic. Residues Phe-42–Gly-62 traverse the membrane as a helical segment. At Phe-63–Ser-83 the chain is on the cytoplasmic side. Residues Ile-84 to Thr-104 form a helical membrane-spanning segment. Topologically, residues Ser-105–Ala-117 are periplasmic. Residues Val-118–Phe-138 form a helical membrane-spanning segment. Residues Gln-139–Ala-173 are Cytoplasmic-facing. A helical membrane pass occupies residues Ile-174–Val-194. The Periplasmic segment spans residues Val-195–Val-220. The helical transmembrane segment at Phe-221–Ile-241 threads the bilayer. Over Ser-242–Thr-295 the chain is Cytoplasmic. The chain crosses the membrane as a helical span at residues Cys-296–Val-316. Over Lys-317 to Val-328 the chain is Periplasmic. A helical transmembrane segment spans residues Ile-329–Ile-349. Over Gln-350 to Ser-362 the chain is Cytoplasmic. Residues Lys-363–Phe-383 form a helical membrane-spanning segment. Topologically, residues Lys-384 to Glu-385 are periplasmic. Residues Ile-386–Phe-406 traverse the membrane as a helical segment. Over Val-407–Cys-415 the chain is Cytoplasmic.

Belongs to the polysaccharide synthase family.

Its subcellular location is the cell inner membrane. The protein operates within bacterial outer membrane biogenesis; LPS O-antigen biosynthesis. Its function is as follows. May be involved in the translocation process of the nascent O-polysaccharide molecules and/or its ligation to lipid A core units. The polypeptide is Putative O-antigen transporter (rfbX) (Escherichia coli (strain K12)).